Here is a 503-residue protein sequence, read N- to C-terminus: AMP phosphorylase (503 aa).

Residues Gly168, 194 to 199 (SRAITS), and Thr203 each bind AMP. Residue Asp256 is the Proton donor of the active site. Residues Ser264 and Lys288 each contribute to the AMP site.

This sequence belongs to the thymidine/pyrimidine-nucleoside phosphorylase family. Type 2 subfamily.

It carries out the reaction AMP + phosphate = alpha-D-ribose 1,5-bisphosphate + adenine. It catalyses the reaction CMP + phosphate = cytosine + alpha-D-ribose 1,5-bisphosphate. The catalysed reaction is UMP + phosphate = alpha-D-ribose 1,5-bisphosphate + uracil. In terms of biological role, catalyzes the conversion of AMP and phosphate to adenine and ribose 1,5-bisphosphate (R15P). Exhibits phosphorylase activity toward CMP and UMP in addition to AMP. Functions in an archaeal AMP degradation pathway, together with R15P isomerase and RubisCO. In Thermococcus sibiricus (strain DSM 12597 / MM 739), this protein is AMP phosphorylase.